Reading from the N-terminus, the 325-residue chain is Inner membrane protein YrbG (325 aa).

The Periplasmic segment spans residues 1-5 (MLLAT). Residues 6-26 (ALLIVGLLLVVYSADRLVFAA) traverse the membrane as a helical segment. Residues 27–37 (SILCRTFGIPP) lie on the Cytoplasmic side of the membrane. The helical transmembrane segment at 38–58 (LIIGMTVVSIGTSLPEVIVSL) threads the bilayer. Topologically, residues 59-67 (AASLHEQRD) are periplasmic. A helical transmembrane segment spans residues 68–88 (LAVGTALGSNIINILLILGLA). The Cytoplasmic portion of the chain corresponds to 89-104 (ALVRPFTVHSDVLRRE). The helical transmembrane segment at 105-125 (LPLMLLVSVVAGSVLYDGQLS) threads the bilayer. Residue Arg-126 is a topological domain, periplasmic. A helical membrane pass occupies residues 127-147 (SDGIFLLFLAVLWLLFIVKLA). The Cytoplasmic portion of the chain corresponds to 148-169 (RQAERQGTDSLTREQLAELPRD). Residues 170–190 (GGLPVAFLWLGIALIIMPVAT) traverse the membrane as a helical segment. At 191–198 (RMVVDNAT) the chain is on the periplasmic side. Residues 199–219 (VLANYFAISELTMGLTAIAIG) form a helical membrane-spanning segment. The Cytoplasmic segment spans residues 220–243 (TSLPELATAIAGVRKGENDIAVGN). The chain crosses the membrane as a helical span at residues 244–264 (IIGANIFNIVIVLGLPALITP). Residues 265 to 269 (GEIDP) are Periplasmic-facing. The helical transmembrane segment at 270–290 (LAYSRDYSVMLLVSIIFALLC) threads the bilayer. At 291-302 (WRRSPQPGRGVG) the chain is on the cytoplasmic side. The helical transmembrane segment at 303–323 (VLLTGGFIVWLAMLYWLSPIL) threads the bilayer. Residues 324-325 (VE) lie on the Periplasmic side of the membrane.

This sequence belongs to the Ca(2+):cation antiporter (CaCA) (TC 2.A.19) family.

It is found in the cell inner membrane. This Escherichia coli (strain K12) protein is Inner membrane protein YrbG (yrbG).